The following is a 245-amino-acid chain: tRNA1(Val) (adenine(37)-N6)-methyltransferase (245 aa).

The protein belongs to the methyltransferase superfamily. tRNA (adenine-N(6)-)-methyltransferase family.

Its subcellular location is the cytoplasm. The catalysed reaction is adenosine(37) in tRNA1(Val) + S-adenosyl-L-methionine = N(6)-methyladenosine(37) in tRNA1(Val) + S-adenosyl-L-homocysteine + H(+). Specifically methylates the adenine in position 37 of tRNA(1)(Val) (anticodon cmo5UAC). The sequence is that of tRNA1(Val) (adenine(37)-N6)-methyltransferase from Escherichia coli O7:K1 (strain IAI39 / ExPEC).